A 413-amino-acid chain; its full sequence is Serine/threonine transporter SstT (413 aa).

Helical transmembrane passes span leucine 18–alanine 38, phenylalanine 52–isoleucine 72, isoleucine 86–methionine 106, isoleucine 119–valine 139, alanine 145–isoleucine 165, leucine 196–glycine 216, leucine 221–phenylalanine 241, valine 292–leucine 312, leucine 320–alanine 340, and leucine 360–valine 380.

It belongs to the dicarboxylate/amino acid:cation symporter (DAACS) (TC 2.A.23) family.

The protein localises to the cell inner membrane. The catalysed reaction is L-serine(in) + Na(+)(in) = L-serine(out) + Na(+)(out). It catalyses the reaction L-threonine(in) + Na(+)(in) = L-threonine(out) + Na(+)(out). Involved in the import of serine and threonine into the cell, with the concomitant import of sodium (symport system). The sequence is that of Serine/threonine transporter SstT from Pseudomonas fluorescens (strain Pf0-1).